The sequence spans 294 residues: 33 kDa chaperonin (294 aa).

Cystine bridges form between Cys238–Cys240 and Cys271–Cys274.

The protein belongs to the HSP33 family. Post-translationally, under oxidizing conditions two disulfide bonds are formed involving the reactive cysteines. Under reducing conditions zinc is bound to the reactive cysteines and the protein is inactive.

It localises to the cytoplasm. Redox regulated molecular chaperone. Protects both thermally unfolding and oxidatively damaged proteins from irreversible aggregation. Plays an important role in the bacterial defense system toward oxidative stress. The chain is 33 kDa chaperonin from Thermoanaerobacter pseudethanolicus (strain ATCC 33223 / 39E) (Clostridium thermohydrosulfuricum).